Here is a 342-residue protein sequence, read N- to C-terminus: GTPase Obg (342 aa).

An Obg domain is found at 1–159 (MKFLDLCKVY…RTIWLRLKLI (159 aa)). The OBG-type G domain maps to 160–327 (ADAGLLGLPN…VLRALWAEID (168 aa)). GTP is bound by residues 166–173 (GLPNAGKS), 191–195 (FTTLV), 212–215 (DIPG), 279–282 (NKID), and 308–310 (SGV). The Mg(2+) site is built by S173 and T193.

It belongs to the TRAFAC class OBG-HflX-like GTPase superfamily. OBG GTPase family. In terms of assembly, monomer. It depends on Mg(2+) as a cofactor.

The protein resides in the cytoplasm. Functionally, an essential GTPase which binds GTP, GDP and possibly (p)ppGpp with moderate affinity, with high nucleotide exchange rates and a fairly low GTP hydrolysis rate. Plays a role in control of the cell cycle, stress response, ribosome biogenesis and in those bacteria that undergo differentiation, in morphogenesis control. In Cereibacter sphaeroides (strain ATCC 17029 / ATH 2.4.9) (Rhodobacter sphaeroides), this protein is GTPase Obg.